A 455-amino-acid polypeptide reads, in one-letter code: EP1-like glycoprotein 2 (455 aa).

The first 22 residues, 1–22 (MSRFAILVTLALAIATVSVVIA), serve as a signal peptide directing secretion. Positions 44 to 163 (EYDASYRFIE…NGKFVWQSFD (120 aa)) constitute a Bulb-type lectin domain. 6 N-linked (GlcNAc...) asparagine glycosylation sites follow: asparagine 56, asparagine 106, asparagine 191, asparagine 211, asparagine 241, and asparagine 289. Cysteine 374 carries the post-translational modification S-nitrosocysteine. The PAN domain maps to 374-455 (CSGVKGKTVN…NTSSVAYIKY (82 aa)). Intrachain disulfides connect cysteine 410/cysteine 432 and cysteine 414/cysteine 420. Residue asparagine 446 is glycosylated (N-linked (GlcNAc...) asparagine).

The protein resides in the secreted. It is found in the cell wall. This Arabidopsis thaliana (Mouse-ear cress) protein is EP1-like glycoprotein 2.